A 174-amino-acid chain; its full sequence is Shikimate kinase 2 (174 aa).

ATP is bound at residue 12–17 (GCGKTT). Mg(2+) is bound by residues Thr16 and Asp32. Residues Asp34, Arg58, and Gly79 each coordinate substrate. The segment at 112 to 126 (EAYPLADQRPTLTGR) is LID domain. Arg120 is an ATP binding site. Arg139 contributes to the substrate binding site. Gln155 lines the ATP pocket.

It belongs to the shikimate kinase family. AroL subfamily. As to quaternary structure, monomer. Mg(2+) serves as cofactor.

It is found in the cytoplasm. The catalysed reaction is shikimate + ATP = 3-phosphoshikimate + ADP + H(+). Its pathway is metabolic intermediate biosynthesis; chorismate biosynthesis; chorismate from D-erythrose 4-phosphate and phosphoenolpyruvate: step 5/7. Its function is as follows. Catalyzes the specific phosphorylation of the 3-hydroxyl group of shikimic acid using ATP as a cosubstrate. In Erwinia tasmaniensis (strain DSM 17950 / CFBP 7177 / CIP 109463 / NCPPB 4357 / Et1/99), this protein is Shikimate kinase 2.